Here is a 273-residue protein sequence, read N- to C-terminus: MDTNVQKRRENKKSLRVKVISLGNAEVGKSCIIKRYCEKRFVPKYLATIGIDYGVTKVQVRDREIKVNIFDMAGHPFFYEVRNEFYKDSQGVILVYDVGLRESFDALDSWLTEMKQEMGSQANMENIIFVVCANKVDLTKRRVVDESEGRLWAESRGFHYFETSAQSGEGINEMFQSFFSSITDMCENGGKRPTPEVSVGFTKEQADTIRRIRNSKDSWDMLGVKPGATREEVNKAYRKLAVLLHPDKCVAPGSEDAFKAVVNARTSLLKNIK.

GTP-binding positions include 23–30 (GNAEVGKS), 71–75 (DMAGH), and 134–137 (NKVD). Positions 217–273 (DSWDMLGVKPGATREEVNKAYRKLAVLLHPDKCVAPGSEDAFKAVVNARTSLLKNIK) constitute a J domain.

It belongs to the small GTPase superfamily. Rab family.

Its subcellular location is the nucleus. GTPase possibly involved in regulation of the MEK/ERK pathway. The polypeptide is DnaJ homolog subfamily C member 27 (dnajc27) (Danio rerio (Zebrafish)).